Here is a 471-residue protein sequence, read N- to C-terminus: Adenosylhomocysteinase (471 aa).

Positions 60, 135, and 196 each coordinate substrate. Residue 197–199 (TTT) participates in NAD(+) binding. Lysine 226 and aspartate 230 together coordinate substrate. Residues asparagine 231, 260–265 (GYGDVG), glutamate 283, asparagine 318, 339–341 (IGH), and asparagine 387 each bind NAD(+).

The protein belongs to the adenosylhomocysteinase family. The cofactor is NAD(+).

Its subcellular location is the cytoplasm. The enzyme catalyses S-adenosyl-L-homocysteine + H2O = L-homocysteine + adenosine. The protein operates within amino-acid biosynthesis; L-homocysteine biosynthesis; L-homocysteine from S-adenosyl-L-homocysteine: step 1/1. May play a key role in the regulation of the intracellular concentration of adenosylhomocysteine. The sequence is that of Adenosylhomocysteinase from Pelodictyon phaeoclathratiforme (strain DSM 5477 / BU-1).